Consider the following 658-residue polypeptide: Putative phospholipase B-like lamina ancestor (658 aa).

The N-terminal stretch at 1-29 is a signal peptide; the sequence is MLKVVGASWQKTRIGTYILIGAGLLVIGA. N-linked (GlcNAc...) asparagine glycans are attached at residues N229, N465, and N486.

This sequence belongs to the phospholipase B-like family. Expressed in neural and glial progenitors prior to, but not after, differentiation. Not expressed in late third instar disks, but is expressed uniformly by early third instar disks, in the imaginal ring of the proventriculus and in the salivary gland.

Its subcellular location is the secreted. Putative phospholipase. Involved in the regulation of cellular plasticity in imaginal disks. In Drosophila melanogaster (Fruit fly), this protein is Putative phospholipase B-like lamina ancestor (lama).